A 104-amino-acid polypeptide reads, in one-letter code: Protein SMALL AUXIN UP-REGULATED RNA 9 (104 aa).

This sequence belongs to the ARG7 family. In terms of assembly, interacts with and inhibits PP2C-D subfamily of type 2C phosphatases such as PP2C67/PP2C-D1. Expressed in etiolated hypocotyls, petioles, leaves and flowers.

It is found in the cell membrane. Provide a mechanistic link between auxin and plasma membrane H(+)-ATPases (PM H(+)-ATPases, e.g. AHA1 and AHA2), and triggers PM H(+)-ATPases activity by promoting phosphorylation of their C-terminal autoinhibitory domain as a result of PP2C-D subfamily of type 2C phosphatases inhibition, thus leading to the acidification of the apoplast and the facilitation of solutes and water uptake to drive cell expansion. Triggers plant growth probably by promoting cell elongation. Regulates branch angles and bending. Probably involved in light intensity mediated root development. This chain is Protein SMALL AUXIN UP-REGULATED RNA 9, found in Arabidopsis thaliana (Mouse-ear cress).